Consider the following 452-residue polypeptide: MQSIFGTDGIRGIFDKELTYSLAYKVGYALGVSTKTNNPILIGRDTRVSGYILIEAISRGINAAGKEFIYLGICPTPAIPFLIKKEKFSGGIMISASHNPPEYNGIKIFDNNGEKIKKKLENQIELILETANNLKLSTYKKTSIRENNNLFNIYTEGLINTMGDENLDGMKIVLDTCYGSATTCAASIFQKLGANVKVINNEQDGLKINLNCGSTCLDPIIKAIKENNADMGFSFDGDADRVIGVDSEGNIIDGDHILFLWGRELLEEKLLTNNTIISTKMANLGFENTWKKIGGILHRTEVGDKFIFEAIKKKKALLGGEQSGHILSKINDFCGDGILTAIQISKYCKKKNISLRSWLNSSFSPYPQKLTNVLLNFKFKNIDKSYKEFINETIESFSNIKKDNCRVYIRPSGTEPVLRILVEARNQQEVDSLSTKITAELSTKIYKISKTF.

The Phosphoserine intermediate role is filled by Ser97. Positions 97, 236, 238, and 240 each coordinate Mg(2+). A Phosphoserine modification is found at Ser97.

The protein belongs to the phosphohexose mutase family. Requires Mg(2+) as cofactor. In terms of processing, activated by phosphorylation.

It carries out the reaction alpha-D-glucosamine 1-phosphate = D-glucosamine 6-phosphate. In terms of biological role, catalyzes the conversion of glucosamine-6-phosphate to glucosamine-1-phosphate. In Prochlorococcus marinus subsp. pastoris (strain CCMP1986 / NIES-2087 / MED4), this protein is Phosphoglucosamine mutase.